The sequence spans 257 residues: Neurotrophin-3 (257 aa).

An N-terminal signal peptide occupies residues 1-18 (MSILFYVIFLAYLRGIQG). Residues 19–138 (NNMDQRSLPE…VANRTSRRKR (120 aa)) constitute a propeptide that is removed on maturation. Positions 61 to 81 (STLPKAEAPREPERGGPAKSA) are disordered. Residues 67-76 (EAPREPERGG) are compositionally biased toward basic and acidic residues. Asn-131 carries N-linked (GlcNAc...) asparagine glycosylation. 3 disulfide bridges follow: Cys-152–Cys-217, Cys-195–Cys-246, and Cys-205–Cys-248.

This sequence belongs to the NGF-beta family. As to expression, brain and peripheral tissues.

Its subcellular location is the secreted. In terms of biological role, seems to promote the survival of visceral and proprioceptive sensory neurons. The chain is Neurotrophin-3 (NTF3) from Homo sapiens (Human).